Here is a 322-residue protein sequence, read N- to C-terminus: Formimidoylglutamase (322 aa).

Mn(2+) is bound by residues histidine 130, aspartate 156, histidine 158, aspartate 160, cysteine 245, and aspartate 247.

The protein belongs to the arginase family. The cofactor is Mn(2+).

The enzyme catalyses N-formimidoyl-L-glutamate + H2O = formamide + L-glutamate. The protein operates within amino-acid degradation; L-histidine degradation into L-glutamate; L-glutamate from N-formimidoyl-L-glutamate (hydrolase route): step 1/1. Functionally, catalyzes the conversion of N-formimidoyl-L-glutamate to L-glutamate and formamide. This chain is Formimidoylglutamase, found in Lysinibacillus sphaericus (strain C3-41).